The following is an 871-amino-acid chain: MNGTSPDESPDSTTQRIDSFNGEQRVYFVPLRWWKDAQDSMPSESVEKREILYTASCGSSYGGPMKLINNIFNSDILFDLRREGDALQNGETGEASVSGRDFALVSSDMWLQALKWYHDDKNTEKGVKSFSAGGVDRGDVYPVQLRLSVLQETNSLAVKICKKDNSVECFRRACKIFSLDSEQLRIWDISGQTTLFFESDVSNSKDCQQQADQEILLELQIYGLSDSIKLKESKKEDGSTQQTNGITNGMNGGTVFRFGRSNSLSFLGKAGEAGTLGLTGLQNLGNTCFMNSSLQCLAHTPKLVDFFLGEYSKEINLDNPLGMKGEIALAFGDLLRSLWAPGASTVAPRTFKAKLARFAPQFSGFNQHDSQELLAFLLDGLHEDLNRVKNKPYVEAKDGDGRPDAEVADEYWRNHVARNDSIIVDVCQGQYKSTLVCPICKKVSVMFDPFMYLSLPLPCTSMRTMDLTVMSADGSSLPIPLTVNVPKFGKFEDLHKALVTACSLPEEETLLVTEVYNNRIIRFLEEPTDSLTLIRDGDKLVVYRLKKDANNSPLIVYMHQKLEEQFISGKSSPTWKAFGIPLVSRLCDVENGSDVENLYLKLLSSFKMPTEFFTENLENPTEEEATDKTDTDGTTSVEDTNSTDVKETTESLPDPVLRLYLTDDRGNSIEAEMLKEKPVNKSKRLNVLARWPVKELDVYDTCLLSSLPEVSKSGTKRPQESVSLFKCLEAFLTEEPLGPDDMWYCPGCKEHRQAIKKLDLWRLPEILVIHLKRFSYSRFMKNKLEAYVDFPLDNLDLSSYISYKNGQTTYRYMLYAISNHYGSMGGGHYTAYVHHGGDRWYDFDDSHVHQISQEKIKTSAAYVLFYKRLVD.

The region spanning 4 to 99 (TSPDESPDST…GETGEASVSG (96 aa)) is the DUSP domain. One can recognise a USP domain in the interval 279–869 (TGLQNLGNTC…AAYVLFYKRL (591 aa)). Residue Cys288 is the Nucleophile of the active site. Residues 615–650 (ENLENPTEEEATDKTDTDGTTSVEDTNSTDVKETTE) are disordered. Residue His828 is the Proton acceptor of the active site.

Belongs to the peptidase C19 family.

The catalysed reaction is Thiol-dependent hydrolysis of ester, thioester, amide, peptide and isopeptide bonds formed by the C-terminal Gly of ubiquitin (a 76-residue protein attached to proteins as an intracellular targeting signal).. Its function is as follows. Recognizes and hydrolyzes the peptide bond at the C-terminal Gly of ubiquitin. Involved in the processing of poly-ubiquitin precursors as well as that of ubiquitinated proteins. This chain is Ubiquitin carboxyl-terminal hydrolase 8 (UBP8), found in Arabidopsis thaliana (Mouse-ear cress).